The chain runs to 481 residues: (S)-N-methylcoclaurine 3'-hydroxylase isozyme 1 (481 aa).

Heme is bound at residue C423.

It belongs to the cytochrome P450 family. It depends on heme as a cofactor. In terms of tissue distribution, restricted to the parietal region of sieve elements adjacent or proximal to laticifers in roots, stems, leaves, carpels and hypocotyls.

It localises to the endoplasmic reticulum. The catalysed reaction is (S)-N-methylcoclaurine + reduced [NADPH--hemoprotein reductase] + O2 = (S)-3'-hydroxy-N-methylcoclaurine + oxidized [NADPH--hemoprotein reductase] + H2O + H(+). The protein operates within alkaloid biosynthesis; (S)-reticuline biosynthesis; (S)-reticuline from (S)-norcoclaurine: step 3/4. Functionally, cytochrome P450 monooxygenase involved in the biosynthesis of benzylisoquinoline alkaloids. Catalyzes the 3'-hydroxylation of (S)-N-methylcoclaurine. This is (S)-N-methylcoclaurine 3'-hydroxylase isozyme 1 from Papaver somniferum (Opium poppy).